The chain runs to 191 residues: CASP-like protein 2U3 (191 aa).

Residues 1 to 25 (MGAYDGAEAPRAAPASTAANSRPSR) are Cytoplasmic-facing. A helical membrane pass occupies residues 26–46 (LLLLHSLLLRLVAVVVSILVI). Residues 47 to 68 (AVMVHAKQRVMIFKAEWDNSKA) are Extracellular-facing. A helical membrane pass occupies residues 69-89 (FVALVAISAICLGYSFLQFIL). At 90–114 (SAFHLCSKSWKSPTKCWAWMNFIAD) the chain is on the cytoplasmic side. The helical transmembrane segment at 115-135 (QILTYAMLGAAAAAAELAYIA) threads the bilayer. Residues 136–157 (KNGSSRAQWQPICSTFNTFCTR) lie on the Extracellular side of the membrane. A glycan (N-linked (GlcNAc...) asparagine) is linked at Asn137. A helical transmembrane segment spans residues 158–178 (AGASIILSFIAVLALANSSAI). Residues 179 to 191 (SAYHLFRRPSSSV) lie on the Cytoplasmic side of the membrane.

The protein belongs to the Casparian strip membrane proteins (CASP) family. Homodimer and heterodimers.

The protein localises to the cell membrane. This is CASP-like protein 2U3 from Selaginella moellendorffii (Spikemoss).